Here is a 321-residue protein sequence, read N- to C-terminus: Ferredoxin--NADP reductase (321 aa).

FAD-binding residues include Glu33, Gln41, Tyr46, Val86, Leu119, Asp277, and Ser318.

Belongs to the ferredoxin--NADP reductase type 2 family. In terms of assembly, homodimer. Requires FAD as cofactor.

It carries out the reaction 2 reduced [2Fe-2S]-[ferredoxin] + NADP(+) + H(+) = 2 oxidized [2Fe-2S]-[ferredoxin] + NADPH. The protein is Ferredoxin--NADP reductase of Lactococcus lactis subsp. lactis (strain IL1403) (Streptococcus lactis).